The chain runs to 612 residues: Glucoamylase (612 aa).

A signal peptide spans 1-19 (MVSFSSCLRALALGSSVLA). The propeptide occupies 20 to 25 (VQPVLR). A glycan (N-linked (GlcNAc...) asparagine) is linked at Asn39. Substrate is bound at residue Trp146. Residue Asp202 is the Proton acceptor of the active site. The Proton donor role is filled by Glu205. 3 disulfide bridges follow: Cys236–Cys239, Cys248–Cys475, and Cys288–Cys296. The region spanning 506–612 (CQVPTTVSVT…KSAVQSDVWR (107 aa)) is the CBM20 domain.

The protein belongs to the glycosyl hydrolase 15 family.

It catalyses the reaction Hydrolysis of terminal (1-&gt;4)-linked alpha-D-glucose residues successively from non-reducing ends of the chains with release of beta-D-glucose.. The protein is Glucoamylase (glaA) of Aspergillus oryzae (strain ATCC 42149 / RIB 40) (Yellow koji mold).